A 152-amino-acid polypeptide reads, in one-letter code: Protein Smg homolog (152 aa).

The protein belongs to the Smg family.

The chain is Protein Smg homolog from Bordetella petrii (strain ATCC BAA-461 / DSM 12804 / CCUG 43448).